The following is a 220-amino-acid chain: Probable nicotinate-nucleotide adenylyltransferase (220 aa).

It belongs to the NadD family.

The enzyme catalyses nicotinate beta-D-ribonucleotide + ATP + H(+) = deamido-NAD(+) + diphosphate. It functions in the pathway cofactor biosynthesis; NAD(+) biosynthesis; deamido-NAD(+) from nicotinate D-ribonucleotide: step 1/1. Functionally, catalyzes the reversible adenylation of nicotinate mononucleotide (NaMN) to nicotinic acid adenine dinucleotide (NaAD). This chain is Probable nicotinate-nucleotide adenylyltransferase, found in Saccharophagus degradans (strain 2-40 / ATCC 43961 / DSM 17024).